A 173-amino-acid polypeptide reads, in one-letter code: Lithostathine-2 (173 aa).

A signal peptide spans 1-22; that stretch reads MAQNNVYLILFLCLMFLSYSQG. The 131-residue stretch at 41–171 folds into the C-type lectin domain; sequence INCPEGANAY…EAQYSFVCKF (131 aa). Disulfide bonds link cysteine 43–cysteine 54, cysteine 71–cysteine 169, and cysteine 144–cysteine 161.

In terms of tissue distribution, expressed only in regenerating islets and normal exocrine pancreas, but not in normal pancreatic islets. Expressed strongly in pancreas, weakly in liver, but not at all in gall bladder.

It is found in the secreted. Might act as an inhibitor of spontaneous calcium carbonate precipitation. The sequence is that of Lithostathine-2 (Reg2) from Mus musculus (Mouse).